Reading from the N-terminus, the 890-residue chain is Protein FAM171A1 (890 aa).

The N-terminal stretch at 1–21 (MSRSATLLLCLLGCHVWKAVT) is a signal peptide. At 22-303 (KTLREPGAGA…VTQDITTYHT (282 aa)) the chain is on the extracellular side. Asparagine 159, asparagine 190, and asparagine 194 each carry an N-linked (GlcNAc...) asparagine glycan. Residues 304–324 (VFLLAILGGMAFILLVLLCLL) form a helical membrane-spanning segment. At 325–890 (LYYCRRKCLK…ERPLMAFNIK (566 aa)) the chain is on the cytoplasmic side. Phosphoserine occurs at positions 358, 360, 371, 422, 443, and 525. Disordered regions lie at residues 730 to 759 (AGRN…RGDA) and 818 to 890 (EGSS…FNIK). The span at 747 to 757 (NEPKSARKGRG) shows a compositional bias: basic and acidic residues. The span at 822–833 (RRSGGQLPSLQE) shows a compositional bias: polar residues. A phosphoserine mark is found at serine 849 and serine 855. Positions 858-869 (EEEEDDDDDDQG) are enriched in acidic residues. The segment covering 870–883 (EDKKSPWQKREERP) has biased composition (basic and acidic residues).

Belongs to the FAM171 family. Interacts with ADAM10, NSG1 and OAZ1. In terms of tissue distribution, expressed in heart, brain, liver, skeletal muscle, kidney and pancreas. In brain, expressed by glia, pyramidal neurons and astrocytes (at protein level). Highly expressed in placental trophoblasts.

It is found in the cell membrane. In terms of biological role, involved in the regulation of the cytoskeletal dynamics, plays a role in actin stress fiber formation. In Homo sapiens (Human), this protein is Protein FAM171A1.